A 101-amino-acid chain; its full sequence is MAKQSMKAREVKRVKLANKFYAQRIALKNTITNLKLSEEERWDAVLKLQIFPRDSSPSRQRNRCRQTGRPHAFLRKFGLSRIKVREAAMKGEIPGLKKASW.

This sequence belongs to the universal ribosomal protein uS14 family. As to quaternary structure, part of the 30S ribosomal subunit. Contacts proteins S3 and S10.

Its function is as follows. Binds 16S rRNA, required for the assembly of 30S particles and may also be responsible for determining the conformation of the 16S rRNA at the A site. The sequence is that of Small ribosomal subunit protein uS14 from Buchnera aphidicola subsp. Schizaphis graminum (strain Sg).